We begin with the raw amino-acid sequence, 73 residues long: Nodulin-1 (73 aa).

The signal sequence occupies residues 1 to 23; that stretch reads MERKTLASLCFFLIVLLAAQVVA. 3 disulfides stabilise this stretch: Cys-39-Cys-64, Cys-49-Cys-71, and Cys-53-Cys-73.

As to expression, expressed in nodules, but not in leaves, stems, flowers and roots. In developing nodules, expressed close to the infection threads.

The protein localises to the secreted. Its function is as follows. Nodulation-related protein probably involved in the infection process. This is Nodulin-1 (N1) from Medicago truncatula (Barrel medic).